Consider the following 353-residue polypeptide: GTPase Obg (353 aa).

The 159-residue stretch at 1–159 folds into the Obg domain; that stretch reads MKFVDEVRIH…RDLVLELKLL (159 aa). One can recognise an OBG-type G domain in the interval 160-333; that stretch reads ADVGIVGYPN…LMDAVGRALY (174 aa). Residues 166–173, 191–195, 212–215, 283–286, and 314–316 each bind GTP; these read GYPNAGKS, FTTLV, DIPG, TKID, and SAV. Residues serine 173 and threonine 193 each coordinate Mg(2+).

It belongs to the TRAFAC class OBG-HflX-like GTPase superfamily. OBG GTPase family. Monomer. The cofactor is Mg(2+).

The protein resides in the cytoplasm. An essential GTPase which binds GTP, GDP and possibly (p)ppGpp with moderate affinity, with high nucleotide exchange rates and a fairly low GTP hydrolysis rate. Plays a role in control of the cell cycle, stress response, ribosome biogenesis and in those bacteria that undergo differentiation, in morphogenesis control. The sequence is that of GTPase Obg from Anaeromyxobacter sp. (strain Fw109-5).